The following is a 349-amino-acid chain: MVTYKDAGVDIYKEDKVIRALASQIKFERNDAIKPADLKGHYAGAIEFGDYYLVLCTDGVGSKMVVAEMANKFDTVPIDMIAMNVNDAICIGAEPVALVDYMAVEDITEDIASQIGKGLNDGIKESNINLIGGETASLPNMIKGVDLAGTVLAVVKKDEIVSGKEVKPGDLIVGLRSSGIHSNGLSLARKVFFDIANLDVNSKLSHGKTVAEELLTPTKIYVKPVLEMIKQVNVKGLAHITGGGFRKLKRLNKEVCYKIDELPEILPIFKEIQNLGSVADEEMFKTFNMGIGFCVIVDKEDAEKIIEISNHHNIPAFVIGKIEDSVELNGETKRETVLVEYNNKKMIME.

Belongs to the AIR synthase family.

The protein localises to the cytoplasm. It carries out the reaction 2-formamido-N(1)-(5-O-phospho-beta-D-ribosyl)acetamidine + ATP = 5-amino-1-(5-phospho-beta-D-ribosyl)imidazole + ADP + phosphate + H(+). It functions in the pathway purine metabolism; IMP biosynthesis via de novo pathway; 5-amino-1-(5-phospho-D-ribosyl)imidazole from N(2)-formyl-N(1)-(5-phospho-D-ribosyl)glycinamide: step 2/2. The protein is Phosphoribosylformylglycinamidine cyclo-ligase of Methanococcus maripaludis (strain C5 / ATCC BAA-1333).